A 416-amino-acid polypeptide reads, in one-letter code: FBD-associated F-box protein At3g52670 (416 aa).

The F-box domain maps to 9-62; it reads EDRMNQLPEDLILRILSFLPTELVIATSVLSKQWRSLWKLVPNLEFDSDDYESE. Positions 327–378 constitute an FBD domain; that stretch reads KWNEPKYVPECLLSHLETFVWIRYDWEREEEKEVATYILRNARWLKKGTIST.

This is FBD-associated F-box protein At3g52670 from Arabidopsis thaliana (Mouse-ear cress).